A 160-amino-acid chain; its full sequence is UPF0225 protein CGSHiEE_01665 (160 aa).

Belongs to the UPF0225 family.

The sequence is that of UPF0225 protein CGSHiEE_01665 from Haemophilus influenzae (strain PittEE).